The primary structure comprises 806 residues: GPI ethanolamine phosphate transferase 2 (806 aa).

Residues Asn70, Asn184, and Asn242 are each glycosylated (N-linked (GlcNAc...) asparagine). A run of 3 helical transmembrane segments spans residues 396–416 (MLFL…YCYI), 425–445 (SVLM…SSFV), and 451–471 (IWWW…PSCT). An N-linked (GlcNAc...) asparagine glycan is attached at Asn488. A run of 8 helical transmembrane segments spans residues 508–528 (PSIK…DGFT), 532–552 (LLSI…TCWA), 593–613 (LFFK…VVFA), 624–644 (LFTI…FLVF), 664–684 (CEMF…QFGG), 706–726 (IYVV…YWSL), 745–765 (LSSM…CICM), and 782–804 (LLGW…LLMV).

The protein belongs to the PIGG/PIGN/PIGO family. PIGG subfamily.

The protein resides in the endoplasmic reticulum membrane. The protein operates within glycolipid biosynthesis; glycosylphosphatidylinositol-anchor biosynthesis. Its function is as follows. Ethanolamine phosphate transferase involved in glycosylphosphatidylinositol-anchor biosynthesis. Transfers ethanolamine phosphate to the GPI second mannose. This chain is GPI ethanolamine phosphate transferase 2 (LAS21), found in Eremothecium gossypii (strain ATCC 10895 / CBS 109.51 / FGSC 9923 / NRRL Y-1056) (Yeast).